Reading from the N-terminus, the 1194-residue chain is Peroxisomal ATPase PEX1 (1194 aa).

The interval 220 to 255 (KTRQRRMSHQGKSVKAKSLASTRHGKRRDDGSGPSG) is disordered. The span at 221–234 (TRQRRMSHQGKSVK) shows a compositional bias: basic residues. The interval 538–730 (RSASVLLTGA…GPEPTLKIEK (193 aa)) is AAA-cassette D1. ATP contacts are provided by residues 546-553 (GARGSGKT) and 849-856 (GYPGCGKT). Residues 844–1028 (GLLLYGYPGC…LYNAHLEAIH (185 aa)) are AAA-cassette D2. Disordered stretches follow at residues 1062–1084 (YISFSMGNKDSTGEPSTQPLTNG), 1116–1139 (QVQQQQSQTNQAQEEEKGDDEPVI), and 1174–1194 (RSGEMPSGQSSTEIGGRSSLM). Residues 1066-1084 (SMGNKDSTGEPSTQPLTNG) show a composition bias toward polar residues. A compositionally biased stretch (low complexity) spans 1116 to 1127 (QVQQQQSQTNQA).

Belongs to the AAA ATPase family. Interacts with PEX6; forming the PEX1-PEX6 AAA ATPase complex, which is composed of a heterohexamer formed by a trimer of PEX1-PEX6 dimers.

The protein localises to the cytoplasm. It localises to the cytosol. The protein resides in the peroxisome membrane. The catalysed reaction is ATP + H2O = ADP + phosphate + H(+). Functionally, component of the PEX1-PEX6 AAA ATPase complex, a protein dislocase complex that mediates the ATP-dependent extraction of the PEX5 receptor from peroxisomal membranes, an essential step for PEX5 recycling. Specifically recognizes PEX5 monoubiquitinated at 'Cys-6', and pulls it out of the peroxisome lumen through the PEX2-PEX10-PEX12 retrotranslocation channel. Extraction by the PEX1-PEX6 AAA ATPase complex is accompanied by unfolding of the TPR repeats and release of bound cargo from PEX5. Regulates autophagy and biogenesis of peroxisomes and Woronin bodies. Plays important roles in mycelial growth and development and stress response. Is also essential for conidiation and fatty acid utilization. Required for nematode predation via trap formation. The sequence is that of Peroxisomal ATPase PEX1 from Arthrobotrys oligospora (strain ATCC 24927 / CBS 115.81 / DSM 1491) (Nematode-trapping fungus).